The primary structure comprises 2090 residues: Non-reducing polyketide synthase rdc1 (2090 aa).

An N-terminal acylcarrier protein transacylase (SAT) domain region spans residues 12–250; sequence FLVGDQVDSW…NPLNIHALQH (239 aa). Residues 375 to 808 enclose the Ketosynthase family 3 (KS3) domain; the sequence is TGRIAIVGMS…GGNACLLLED (434 aa). Catalysis depends on for beta-ketoacyl synthase activity residues cysteine 551, histidine 686, and histidine 726. The interval 912-1195 is malonyl-CoA:ACP transacylase (MAT) domain; the sequence is IFVFSGQGSH…NQVCTQFVRA (284 aa). The active-site For acyl/malonyl transferase activity is the serine 1003. The segment at 1293-1433 is N-terminal hotdog fold; sequence QHVAKESSSN…LVVQKNVKAL (141 aa). In terms of domain architecture, PKS/mFAS DH spans 1293 to 1607; sequence QHVAKESSSN…FVRISNALLQ (315 aa). Residues 1304–1604 form a product template (PT) domain region; that stretch reads GKLEITFRAS…NLSFVRISNA (301 aa). The segment at 1459–1607 is C-terminal hotdog fold; it reads QGHWLKHDIF…FVRISNALLQ (149 aa). The tract at residues 1615–1650 is disordered; that stretch reads SKPVGRGMAKQEKQEVPATTEVVRQPEKEESRHSVD. Over residues 1638–1649 the composition is skewed to basic and acidic residues; the sequence is RQPEKEESRHSV. One can recognise a Carrier domain in the interval 1649 to 1726; that stretch reads VDTPSFSDVL…DIKRAFDILT (78 aa). Serine 1686 is subject to O-(pantetheine 4'-phosphoryl)serine. Residues 1820–1964 are thioesterase (TE) domain; sequence ADGTGSIATY…THQHLKALFA (145 aa).

It participates in secondary metabolite biosynthesis. Functionally, non-reducing polyketide synthase; part of the gene cluster that mediates the biosynthesis of radicicol, a resorcylic acid lactone (RAL) that irreversibly inhibits the HSP90 molecular chaperone, an important target for cancer chemotherapy. The radicicol cluster encodes only two apparent post-PKS enzymes, a cytochrome P450 monooxygenase (rdc4) and a non-heme halogenase (rdc2) that could introduce the epoxide and the chlorine, respectively. If this cluster includes all the genes required for radicicol biosynthesis, the remaining structural features of radicicol are presumably generated by the PKSs rdc1 and rdc5. The C-2' ketone could arise if the R-PKS rdc5 and NR-PKS rdc1 each carry out four iterations, in contrast to the five iteration-three iteration split for the hypothemycin PKSs. The origin of the cis 5',6' double bond is not known. The radicicol R-PKS rdc5 ER domain may catalyze either double bond isomerization or reduction in the third iteration. This Metacordyceps chlamydosporia (Nematophagous fungus) protein is Non-reducing polyketide synthase rdc1.